We begin with the raw amino-acid sequence, 1196 residues long: Calcium-activated potassium channel subunit alpha-1 (1196 aa).

Residues 1 to 52 (MATWNASQIILNSMSNIIESPQSKPRPVMASNGASLFIPVTMEVPCDQGTRM) are Extracellular-facing. Residues 53-73 (WWAFLASSMVTFFGGLFIILV) traverse the membrane as a helical segment. Residues 74 to 146 (WRTFKYLWTV…MISAQTLTGR (73 aa)) are Cytoplasmic-facing. Residues 147–167 (VLVVTVFALSIGALMIYFIDS) traverse the membrane as a helical segment. At 168 to 182 (SNPIESCQNFYKDFT) the chain is on the extracellular side. The helical transmembrane segment at 183–203 (LQIDMAFNIFFLLYFGLRFIA) threads the bilayer. Residues 204–207 (ANDK) lie on the Cytoplasmic side of the membrane. The helical transmembrane segment at 208–228 (LWFWLEVNSVVDFFTVPPVFV) threads the bilayer. Topologically, residues 229 to 232 (SVYL) are extracellular. A helical; Voltage-sensor membrane pass occupies residues 233–253 (NRSWLGLRFLRALRLIQFSEI). At 254 to 268 (LQFLNILKTSNSIKL) the chain is on the cytoplasmic side. The chain crosses the membrane as a helical span at residues 269 to 289 (VNLCSIFISTWLTAAGFIHLV). The Extracellular segment spans residues 290 to 303 (ENSGDPWRNFENSQ). Residues 304–326 (DLSYWECMYLLMVTMSTVGYGDV) constitute an intramembrane region (pore-forming). The Selectivity for potassium motif lies at 320-323 (TVGY). Topologically, residues 327–335 (YAKTTLGRL) are extracellular. A helical membrane pass occupies residues 336-356 (FMVFFILGGLAMFASYVPEII). Residues 357-1196 (ELIGNRKKYG…PPIREVEDEC (840 aa)) lie on the Cytoplasmic side of the membrane. One can recognise an RCK N-terminal 1 domain in the interval 375-517 (RKHIVVCGHI…WNWKDGDDAI (143 aa)). Mg(2+) contacts are provided by Glu-407, Gln-430, and Glu-432. The segment S7 stretch occupies residues 524–544 (LGFIAQSCLAQGLSTMLANLF). The segment at 581–601 (LSFPAVCELCFVKLKLLMIAI) is segment S8. The segment at 645 to 649 (CKACH) is heme-binding motif. A disordered region spans residues 672–697 (SALSPKKKQRNGGMRHSPNTSPNMMR). Positions 748 to 768 (VLSGHVVVCIFGDMTSALIGV) are segment S9. One can recognise an RCK N-terminal 2 domain in the interval 750-894 (SGHVVVCIFG…MERSSPDNSP (145 aa)). The short motif at 914–936 (TELVNDSNVQFLDQDDDDDPDTE) is the Calcium bowl element. Positions 923, 926, 929, and 931 each coordinate Ca(2+). The tract at residues 943 to 963 (FACGTAFAVSVLDSLMSATYF) is segment S10. Residues 1098–1119 (ASLSHSSHSSHSSSKKSSSVTS) show a composition bias toward low complexity. The interval 1098–1149 (ASLSHSSHSSHSSSKKSSSVTSILHTASANRQNRVKARDSRDKQKMGQAEKK) is disordered. Residues 1120–1129 (ILHTASANRQ) are compositionally biased toward polar residues. Over residues 1133 to 1149 (KARDSRDKQKMGQAEKK) the composition is skewed to basic and acidic residues.

The protein belongs to the potassium channel family. Calcium-activated (TC 1.A.1.3) subfamily. KCa1.1/KCNMA1 sub-subfamily. In terms of assembly, homotetramer; which constitutes the calcium-activated potassium channel. As to expression, expressed in both the somites and neural tube of 1 day embryos. Within the nervous system, it is restricted to dorsal parts, and expressed centrally in regions dedicated to processing of sensory information. Six hours later, it is expressed segmentally within the somites. At this time, it is expressed in a primary sensory organ, the trigeminal ganglion. By 2 days, it is also expressed in other primary sensory organs, such as the otic vesicle, and the eye. Within the retina, it is expressed to an internal layer. In the developing otic vesicle, it is abundantly expressed near the apical surface. Isoform 3 is neural-specific, and is only expressed during late stages of neuronal differentiation.

It is found in the cell membrane. The catalysed reaction is K(+)(in) = K(+)(out). Ethanol and carbon monoxide-bound heme increase channel activation. Heme inhibits channel activation. Potassium channel activated by both membrane depolarization or increase in cytosolic Ca(2+) that mediates export of K(+). It is also activated by the concentration of cytosolic Mg(2+). Its activation dampens the excitatory events that elevate the cytosolic Ca(2+) concentration and/or depolarize the cell membrane. It therefore contributes to repolarization of the membrane potential. Plays a key role in controlling excitability in a number of systems, such as regulation of the contraction of smooth muscle, the tuning of hair cells in the cochlea, regulation of transmitter release, and innate immunity. In smooth muscles, its activation by high level of Ca(2+), caused by ryanodine receptors in the sarcoplasmic reticulum, regulates the membrane potential. In cochlea cells, its number and kinetic properties partly determine the characteristic frequency of each hair cell and thereby helps to establish a tonotopic map. Highly sensitive to both iberiotoxin (IbTx) and charybdotoxin (CTX). The chain is Calcium-activated potassium channel subunit alpha-1 (kcnma1) from Xenopus laevis (African clawed frog).